Reading from the N-terminus, the 345-residue chain is S-adenosylmethionine:tRNA ribosyltransferase-isomerase (345 aa).

This sequence belongs to the QueA family. As to quaternary structure, monomer.

It is found in the cytoplasm. The enzyme catalyses 7-aminomethyl-7-carbaguanosine(34) in tRNA + S-adenosyl-L-methionine = epoxyqueuosine(34) in tRNA + adenine + L-methionine + 2 H(+). Its pathway is tRNA modification; tRNA-queuosine biosynthesis. In terms of biological role, transfers and isomerizes the ribose moiety from AdoMet to the 7-aminomethyl group of 7-deazaguanine (preQ1-tRNA) to give epoxyqueuosine (oQ-tRNA). The protein is S-adenosylmethionine:tRNA ribosyltransferase-isomerase of Alkalilimnicola ehrlichii (strain ATCC BAA-1101 / DSM 17681 / MLHE-1).